The primary structure comprises 341 residues: UPF0283 membrane protein HD_1769 (341 aa).

Helical transmembrane passes span 57 to 77 (LLAV…QCLI), 86 to 106 (IDLA…GAII), and 204 to 224 (ENAI…MIAW).

It belongs to the UPF0283 family.

The protein localises to the cell inner membrane. This Haemophilus ducreyi (strain 35000HP / ATCC 700724) protein is UPF0283 membrane protein HD_1769.